The primary structure comprises 228 residues: Putative adhesin RBE_1271 (228 aa).

The signal sequence occupies residues methionine 1–alanine 22.

This chain is Putative adhesin RBE_1271, found in Rickettsia bellii (strain RML369-C).